The chain runs to 393 residues: SEC12-like protein 2 (393 aa).

N-acetylalanine is present on Ala2. The Cytoplasmic portion of the chain corresponds to 2–367; the sequence is ANQSTETNQP…EQKGDKPGVR (366 aa). The segment at 41 to 67 is disordered; sequence EKSEDDDESSSSSSSSRSCIVLSGGGG. Phosphoserine is present on Ser43. WD repeat units lie at residues 151–190, 193–231, 283–322, and 326–367; these read RDVGQQLALAFNPEGSVLAAGAEDGTLRVFKWPSMNTLLN, QAHSSVKCLTFSESGQFLVSLGGPVCRVWDVNASAAVAS, IKKNSISAFNVSADGKLLAIGTLEGDVLILESTRMQTIQV, and AHLG…PGVR. The helical; Signal-anchor for type II membrane protein transmembrane segment at 368 to 388 threads the bilayer; that stretch reads WWLLVLLIVLLYVVAYYYMKA. At 389–393 the chain is on the lumenal side; sequence KGIIP.

Interacts with BZIP28.

It is found in the endoplasmic reticulum membrane. The protein resides in the golgi apparatus. It localises to the cis-Golgi network membrane. In terms of biological role, required for the formation or budding of transport vesicles from the ER. The polypeptide is SEC12-like protein 2 (STL2P) (Arabidopsis thaliana (Mouse-ear cress)).